The primary structure comprises 767 residues: Protein SQS1 (767 aa).

A compositionally biased stretch (basic residues) spans 1–34; sequence MAKRHKHFEGRGRGGSRGRGRGRGGSRGRGRGGS. Disordered regions lie at residues 1 to 71, 101 to 127, 147 to 258, 363 to 387, and 466 to 494; these read MAKR…FNFA, SMKM…ARPV, RSKN…STVK, KNSS…DPEF, and EEPP…EIGD. The segment covering 35-45 has biased composition (gly residues); sequence RSRGAGRGGFG. Residues 173–239 are compositionally biased toward acidic residues; the sequence is ESGTEEEIEE…LFFIDEEGYN (67 aa). A compositionally biased stretch (polar residues) spans 245-254; sequence TVPSVSISED. Residues 481–493 are compositionally biased toward acidic residues; that stretch reads TSEEESDNDSEIG. Residues 589–652 form the R3H domain; it reads GLHVLNIKEE…QTHIFVQKVK (64 aa). One can recognise a G-patch domain in the interval 716–763; it reads RNNIGRILLERLGWSEGEGLGIQGNKGISEPVFAVVKKSKTGLRHERK.

This sequence belongs to the SQS1 family.

The protein localises to the cytoplasm. It is found in the nucleus. May be involved in splicing. The chain is Protein SQS1 (SQS1) from Vanderwaltozyma polyspora (strain ATCC 22028 / DSM 70294 / BCRC 21397 / CBS 2163 / NBRC 10782 / NRRL Y-8283 / UCD 57-17) (Kluyveromyces polysporus).